The chain runs to 987 residues: MMQTPFHKFFLLAMLSYSLLQGGHAADISMPPGIYDGTTLTAPFPYTVIGDPRGTKVTSSGSLELKNLDNSIATLPLSCFGNLLGNFTIAGRGHSLVFENIRTSTNGAALSNHAPSGLFVIEAFDELSLLNCNSLVSVVPQTGGTTTSVPSNGTIYSRTDLVLRDIKKVSFYSNLVSGDGGAIDAQSLMVNGIEKLCTFQENVAQSDGGACQVTKTFSAVGNKVPLSFLGNVAGNKGGGVAAVKDGQGAGGATDLSVNFANNTAVEFEGNSARIGGGIYSDGNISFLGNAKTVFLSNVASPIYVDPAAAGGQPPADKDNYGDGGAIFCKNDTNIGEVSFKDEGVVFFSKNIAAGKGGAIYAKKLTISDCGPVQFLGNVANDGGAIYLVDQGELSLSADRGDIIFDGNLKRMATQGAATVHDVMVASNAISMATGGQITTLRAKEGRRILFNDPIEMANGQPVIQTLTVNEGEGYTGDIVFAKGDNVLYSSIELSQGRIILREQTKLLVNSLTQTGGSVHMEGGSTLDFAVTTPPAANSMALTNVHFSLASLLKNNGVTNPPTNPPVQVSSPAVIGNTAAGTVTISGPIFFEDLDETAYDNNQWLGADQTIDVLQLHLGANPPANAPTDLTLGNESSKYGYQGSWTLQWEPDPANPPQNNSYMLKASWTKTGYNPGPERVASLVSNSLWGSILDVRSAHSAIQASIDGRAYCRGIWISGISNFFYHDQDALGQGYRHISGGYSIGANSYFGSSMFGLAFTETFGRSKDYVVCRSNDHTCVGSVYLSTRQALCGSCLFGDAFVRASYGFGNQHMKTSYTFAEESNVRWDNNCVVGEVGAGLPIMLAASKLYLNELRPFVQAEFAYAEHESFTERGDQAREFKSGHLMNLSIPVGVKFDRCSSKHPNKYSFMGAYICDAYRSISGTETTLLSHKETWTTDAFHLARHGVMVRGSMYASLTGNIEVYGHGKYEYRDASRGYGLSIGSKIRF.

Positions 1–25 (MMQTPFHKFFLLAMLSYSLLQGGHA) are cleaved as a signal peptide. Residues 707 to 987 (GRAYCRGIWI…GLSIGSKIRF (281 aa)) enclose the Autotransporter domain.

This sequence belongs to the PMP outer membrane protein family.

Its subcellular location is the secreted. It is found in the cell wall. The protein resides in the cell outer membrane. In Chlamydia muridarum (strain MoPn / Nigg), this protein is Probable outer membrane protein PmpG (pmpG).